Consider the following 94-residue polypeptide: Large ribosomal subunit protein uL23 (94 aa).

This sequence belongs to the universal ribosomal protein uL23 family. In terms of assembly, part of the 50S ribosomal subunit. Contacts protein L29, and trigger factor when it is bound to the ribosome.

One of the early assembly proteins it binds 23S rRNA. One of the proteins that surrounds the polypeptide exit tunnel on the outside of the ribosome. Forms the main docking site for trigger factor binding to the ribosome. This is Large ribosomal subunit protein uL23 from Treponema pallidum (strain Nichols).